The chain runs to 446 residues: Coagulation factor VII (446 aa).

A signal peptide spans 1-24 (MVPQTHGLLLLYFLLQLQGPLGAV). Positions 25–41 (VFITQEEAHGVLHRQRR) are excised as a propeptide. A Gla domain is found at 42 to 86 (ANSLLEELWSSSLERECNEERCSFEEAREIFKSPERTKQFWTIYS). 4-carboxyglutamate occurs at positions 47, 48, 55, 57, 60, 61, 66, 67, 70, and 76. Cys58 and Cys63 form a disulfide bridge. The region spanning 87 to 123 (DGDQCASNPCQNGGTCQDHLKSYVCFCPLDFEGRNCE) is the EGF-like 1; calcium-binding domain. Disulfide bonds link Cys91/Cys102, Cys96/Cys111, Cys113/Cys122, Cys132/Cys143, Cys139/Cys153, Cys155/Cys168, Cys176/Cys303, Cys200/Cys205, Cys219/Cys235, and Cys351/Cys370. Ser93 is a glycosylation site (O-linked (Glc...) serine; alternate). Ser93 carries O-linked (Xyl...) serine; alternate glycosylation. A glycan (O-linked (Fuc) threonine) is linked at Thr101. Position 104 is a (3R)-3-hydroxyaspartate (Asp104). The region spanning 128-169 (EQLICANENGDCDQYCRDHVGTKRTCSCHEDYVLQPDEVSCK) is the EGF-like 2 domain. N-linked (GlcNAc...) asparagine glycosylation occurs at Asn186. One can recognise a Peptidase S1 domain in the interval 194–433 (IVGGYVCPKG…YIDWLVKYMD (240 aa)). His234 (charge relay system) is an active-site residue. Asn244 carries N-linked (GlcNAc...) asparagine glycosylation. Residue Asp283 is the Charge relay system of the active site. Asp379 is a binding site for substrate. The cysteines at positions 381 and 409 are disulfide-linked. Catalysis depends on Ser385, which acts as the Charge relay system.

Belongs to the peptidase S1 family. Heterodimer of a light chain and a heavy chain linked by a disulfide bond. The vitamin K-dependent, enzymatic carboxylation of some glutamate residues allows the modified protein to bind calcium. In terms of processing, the iron and 2-oxoglutarate dependent 3-hydroxylation of aspartate and asparagine is (R) stereospecific within EGF domains. Post-translationally, can be either O-glucosylated or O-xylosylated at Ser-93 by POGLUT1. In terms of tissue distribution, plasma.

It is found in the secreted. It catalyses the reaction Selective cleavage of Arg-|-Ile bond in factor X to form factor Xa.. Functionally, initiates the extrinsic pathway of blood coagulation. Serine protease that circulates in the blood in a zymogen form. Factor VII is converted to factor VIIa by factor Xa, factor XIIa, factor IXa, or thrombin by minor proteolysis. In the presence of tissue factor and calcium ions, factor VIIa then converts factor X to factor Xa by limited proteolysis. Factor VIIa also converts factor IX to factor IXa in the presence of tissue factor and calcium. The sequence is that of Coagulation factor VII (F7) from Rattus norvegicus (Rat).